We begin with the raw amino-acid sequence, 246 residues long: Uridylate kinase (246 aa).

ATP is bound at residue 11 to 14 (KLSG). Gly-53 serves as a coordination point for UMP. Residues Gly-54 and Arg-58 each coordinate ATP. Residues Asp-73 and 134-141 (TGNPYFTT) contribute to the UMP site. 3 residues coordinate ATP: Thr-161, Tyr-167, and Asp-170.

Belongs to the UMP kinase family. Homohexamer.

The protein localises to the cytoplasm. It carries out the reaction UMP + ATP = UDP + ADP. It functions in the pathway pyrimidine metabolism; CTP biosynthesis via de novo pathway; UDP from UMP (UMPK route): step 1/1. Inhibited by UTP. In terms of biological role, catalyzes the reversible phosphorylation of UMP to UDP. This is Uridylate kinase from Leptospira borgpetersenii serovar Hardjo-bovis (strain JB197).